We begin with the raw amino-acid sequence, 373 residues long: 3 beta-hydroxysteroid dehydrogenase/Delta 5--&gt;4-isomerase type 2 (373 aa).

Catalysis depends on Tyr155, which acts as the Proton acceptor. Lys159 lines the NAD(+) pocket. A helical membrane pass occupies residues 288 to 308 (LPLLYWLAFLLETVSFLLRPF).

The protein belongs to the 3-beta-HSD family. As to expression, adrenal glands, testes and ovaries.

The protein localises to the endoplasmic reticulum membrane. It localises to the mitochondrion membrane. The catalysed reaction is a 3beta-hydroxy-Delta(5)-steroid + NAD(+) = a 3-oxo-Delta(5)-steroid + NADH + H(+). It catalyses the reaction a 3-oxo-Delta(5)-steroid = a 3-oxo-Delta(4)-steroid. It participates in lipid metabolism; steroid biosynthesis. Functionally, 3-beta-HSD is a bifunctional enzyme, that catalyzes the oxidative conversion of Delta(5)-ene-3-beta-hydroxy steroid, and the oxidative conversion of ketosteroids. The 3-beta-HSD enzymatic system plays a crucial role in the biosynthesis of all classes of hormonal steroids. This is 3 beta-hydroxysteroid dehydrogenase/Delta 5--&gt;4-isomerase type 2 (Hsd3b) from Rattus norvegicus (Rat).